The following is a 389-amino-acid chain: Innexin-6 (389 aa).

A run of 4 helical transmembrane segments spans residues 36–56, 111–131, 190–210, and 276–296; these read VVIL…GDPI, VFAL…AMIA, LFYT…FYIL, and LFIF…VNCF.

The protein belongs to the pannexin family.

The protein resides in the cell membrane. The protein localises to the cell junction. It is found in the gap junction. Its function is as follows. Structural component of the gap junctions. The protein is Innexin-6 (inx-6) of Caenorhabditis elegans.